A 228-amino-acid polypeptide reads, in one-letter code: Cytidylate kinase (228 aa).

Residue 17–25 (GPTASGKGT) participates in ATP binding.

The protein belongs to the cytidylate kinase family. Type 1 subfamily.

Its subcellular location is the cytoplasm. It carries out the reaction CMP + ATP = CDP + ADP. It catalyses the reaction dCMP + ATP = dCDP + ADP. The polypeptide is Cytidylate kinase (Burkholderia multivorans (strain ATCC 17616 / 249)).